Here is a 199-residue protein sequence, read N- to C-terminus: Recombination protein RecR (199 aa).

The segment at 57–72 (CSICGNITESDPCEIC) adopts a C4-type zinc-finger fold. One can recognise a Toprim domain in the interval 80–176 (STIMVVEQPK…KVTRLAAGLA (97 aa)).

It belongs to the RecR family.

May play a role in DNA repair. It seems to be involved in an RecBC-independent recombinational process of DNA repair. It may act with RecF and RecO. The chain is Recombination protein RecR from Lactobacillus johnsonii (strain CNCM I-12250 / La1 / NCC 533).